A 251-amino-acid chain; its full sequence is Hydroxyacylglutathione hydrolase (251 aa).

Zn(2+) is bound by residues histidine 53, histidine 55, aspartate 57, histidine 58, histidine 110, aspartate 127, and histidine 165.

Belongs to the metallo-beta-lactamase superfamily. Glyoxalase II family. As to quaternary structure, monomer. Zn(2+) serves as cofactor.

It carries out the reaction an S-(2-hydroxyacyl)glutathione + H2O = a 2-hydroxy carboxylate + glutathione + H(+). It participates in secondary metabolite metabolism; methylglyoxal degradation; (R)-lactate from methylglyoxal: step 2/2. Functionally, thiolesterase that catalyzes the hydrolysis of S-D-lactoyl-glutathione to form glutathione and D-lactic acid. The sequence is that of Hydroxyacylglutathione hydrolase from Blochmanniella pennsylvanica (strain BPEN).